Reading from the N-terminus, the 297-residue chain is Homoserine kinase (297 aa).

Pro-82–Ser-92 is an ATP binding site.

It belongs to the GHMP kinase family. Homoserine kinase subfamily.

It localises to the cytoplasm. The catalysed reaction is L-homoserine + ATP = O-phospho-L-homoserine + ADP + H(+). It functions in the pathway amino-acid biosynthesis; L-threonine biosynthesis; L-threonine from L-aspartate: step 4/5. Its function is as follows. Catalyzes the ATP-dependent phosphorylation of L-homoserine to L-homoserine phosphate. The polypeptide is Homoserine kinase (Bacillus cereus (strain B4264)).